The chain runs to 213 residues: Probable nicotinate-nucleotide adenylyltransferase (213 aa).

Belongs to the NadD family.

The enzyme catalyses nicotinate beta-D-ribonucleotide + ATP + H(+) = deamido-NAD(+) + diphosphate. Its pathway is cofactor biosynthesis; NAD(+) biosynthesis; deamido-NAD(+) from nicotinate D-ribonucleotide: step 1/1. Catalyzes the reversible adenylation of nicotinate mononucleotide (NaMN) to nicotinic acid adenine dinucleotide (NaAD). This is Probable nicotinate-nucleotide adenylyltransferase from Trichlorobacter lovleyi (strain ATCC BAA-1151 / DSM 17278 / SZ) (Geobacter lovleyi).